We begin with the raw amino-acid sequence, 250 residues long: Probable transcriptional regulatory protein Mmc1_0479 (250 aa).

Belongs to the TACO1 family.

The protein resides in the cytoplasm. In Magnetococcus marinus (strain ATCC BAA-1437 / JCM 17883 / MC-1), this protein is Probable transcriptional regulatory protein Mmc1_0479.